Here is a 293-residue protein sequence, read N- to C-terminus: Glycine--tRNA ligase alpha subunit (293 aa).

The protein belongs to the class-II aminoacyl-tRNA synthetase family. Tetramer of two alpha and two beta subunits.

The protein localises to the cytoplasm. The catalysed reaction is tRNA(Gly) + glycine + ATP = glycyl-tRNA(Gly) + AMP + diphosphate. The polypeptide is Glycine--tRNA ligase alpha subunit (Oceanobacillus iheyensis (strain DSM 14371 / CIP 107618 / JCM 11309 / KCTC 3954 / HTE831)).